The primary structure comprises 88 residues: Apolipoprotein C-I (88 aa).

The signal sequence occupies residues 1 to 26 (MRLFLSLPVLVVVLAMVLEGPAPAQA).

It belongs to the apolipoprotein C1 family.

Its subcellular location is the secreted. Its function is as follows. Inhibitor of lipoprotein binding to the low density lipoprotein (LDL) receptor, LDL receptor-related protein, and very low density lipoprotein (VLDL) receptor. Associates with high density lipoproteins (HDL) and the triacylglycerol-rich lipoproteins in the plasma and makes up about 10% of the protein of the VLDL and 2% of that of HDL. Appears to interfere directly with fatty acid uptake and is also the major plasma inhibitor of cholesteryl ester transfer protein (CETP). Binds free fatty acids and reduces their intracellular esterification. Modulates the interaction of APOE with beta-migrating VLDL and inhibits binding of beta-VLDL to the LDL receptor-related protein. The polypeptide is Apolipoprotein C-I (APOC1) (Arctocephalus gazella (Antarctic fur seal)).